Here is a 445-residue protein sequence, read N- to C-terminus: Phosphoglucosamine mutase (445 aa).

The active-site Phosphoserine intermediate is the Ser102. Residues Ser102, Asp241, Asp243, and Asp245 each coordinate Mg(2+). Ser102 carries the phosphoserine modification.

Belongs to the phosphohexose mutase family. Mg(2+) serves as cofactor. Post-translationally, activated by phosphorylation.

The catalysed reaction is alpha-D-glucosamine 1-phosphate = D-glucosamine 6-phosphate. Functionally, catalyzes the conversion of glucosamine-6-phosphate to glucosamine-1-phosphate. This Pectobacterium carotovorum subsp. carotovorum (strain PC1) protein is Phosphoglucosamine mutase.